The following is a 146-amino-acid chain: MRALQFLLRVSPAFLLLVLCLQLEINKAEESIWKVIQMDLQMPTVAVANEEVTVKLGIQTELKECMVIKAYLRSNIQIDGPFNYRYTSCLCDDYPRTFYWDLVANRTATIAAVVDIIRELDICPEDRAVVPIKSNRYYVLHRLNVS.

Residues 1 to 28 (MRALQFLLRVSPAFLLLVLCLQLEINKA) form the signal peptide. 2 disulfides stabilise this stretch: cysteine 65–cysteine 91 and cysteine 89–cysteine 123. Asparagine 105 carries N-linked (GlcNAc...) asparagine glycosylation.

This sequence belongs to the PIP family. Monomer. Interacts with AZGP1.

It localises to the secreted. The chain is Prolactin-inducible protein homolog (PIP) from Oryctolagus cuniculus (Rabbit).